Here is a 142-residue protein sequence, read N- to C-terminus: Hemoglobin subunit zeta (142 aa).

Ser2 carries the post-translational modification N-acetylserine. A Globin domain is found at 2–142; that stretch reads SLTRTERTII…VSGVLTEKYR (141 aa). Thr29 bears the Phosphothreonine mark. At Ser53 the chain carries Phosphoserine. His59 serves as a coordination point for heme b. Phosphoserine is present on residues Ser73 and Ser82. His88 serves as a coordination point for heme b.

Belongs to the globin family. Heterotetramer of two zeta chains and beta-type chains.

The zeta chain is an alpha-type chain of mammalian embryonic hemoglobin. This Capra hircus (Goat) protein is Hemoglobin subunit zeta (HBZ1).